Consider the following 524-residue polypeptide: Translation initiation factor eIF2B subunit delta (524 aa).

The tract at residues 1-173 (MATAAVAVRE…ERQQVPTRKD (173 aa)) is disordered. At Ala-2 the chain carries N-acetylalanine. Phosphoserine is present on Ser-12. Over residues 26–40 (AEGREMTQEEKLQLR) the composition is skewed to basic and acidic residues. Over residues 41-51 (KEKKQQKKKRK) the composition is skewed to basic residues. The residue at position 86 (Thr-86) is a Phosphothreonine. Composition is skewed to basic and acidic residues over residues 87–121 (AKEK…RKGD) and 161–173 (KKPE…TRKD). Residues 171–180 (RKDYGSKVSL) are may bind the chemical integrated stress response (ISR) inhibitor ISRIB.

Belongs to the eIF-2B alpha/beta/delta subunits family. In terms of assembly, component of the translation initiation factor 2B (eIF2B) complex which is a heterodecamer of two sets of five different subunits: alpha, beta, gamma, delta and epsilon. Subunits alpha, beta and delta comprise a regulatory subcomplex and subunits epsilon and gamma comprise a catalytic subcomplex. Within the complex, the hexameric regulatory complex resides at the center, with the two heterodimeric catalytic subcomplexes bound on opposite sides.

The protein resides in the cytoplasm. It localises to the cytosol. With respect to regulation, activated by the chemical integrated stress response (ISR) inhibitor ISRIB which stimulates guanine nucleotide exchange factor activity for both phosphorylated and unphosphorylated eIF2. Its function is as follows. Acts as a component of the translation initiation factor 2B (eIF2B) complex, which catalyzes the exchange of GDP for GTP on eukaryotic initiation factor 2 (eIF2) gamma subunit. Its guanine nucleotide exchange factor activity is repressed when bound to eIF2 complex phosphorylated on the alpha subunit, thereby limiting the amount of methionyl-initiator methionine tRNA available to the ribosome and consequently global translation is repressed. This chain is Translation initiation factor eIF2B subunit delta (EIF2B4), found in Bos taurus (Bovine).